We begin with the raw amino-acid sequence, 691 residues long: MAAAGVVSGKIIYEQEGVYIHSSCGKTNDQDGLISGILRVLEKDAEVIVDWRPLDDALDSSSILYARKDSSSVVEWTQAPKERGHRGSEHLNSYEAEWDMVNTVSFKRKPHTNGDAPSHRNGKSKWSFLFSLTDLKSIKQNKEGMGWSYLVFCLKDDVVLPALHFHQGDSKLLIESLEKYVVLCESPQDKRTLLVNCQNKSLSQSFENLLDEPAYGLIQAGLLDRRKLLWAIHHWKKIKKDPYTATMIGFSKVTNYIFDSLRGSDPSTHQRPPSEMADFLSDAIPGLKINQQEEPGFEVITRIDLGERPVVQRREPVSLEEWTKNIDSEGRILNVDNMKQMIFRGGLSHALRKQAWKFLLGYFPWDSTKEERTQLQKQKTDEYFRMKLQWKSISQEQEKRNSRLRDYRSLIEKDVNRTDRTNKFYEGQDNPGLILLHDILMTYCMYDFDLGYVQGMSDLLSPLLYVMENEVDAFWCFASYMDQMHQNFEEQMQGMKTQLIQLSTLLRLLDSGFCSYLESQDSGYLYFCFRWLLIRFKREFSFLDILRLWEVMWTELPCTNFHLLLCCAILESEKQQIMEKHYGFNEILKHINELSMKIDVEDILCKAEAISLQMVKCKELPQAVCEILGLQGSEVTTPDSDVGEDENVVMTPCPTSAFQSNALPTLSASGARNDSPTQIPVSSDVCRLTPA.

N-acetylalanine is present on Ala2. Phosphoserine occurs at positions 23, 70, 205, 213, and 274. One can recognise a Rab-GAP TBC domain in the interval 346 to 556; sequence GLSHALRKQA…RLWEVMWTEL (211 aa). Ser640 and Ser675 each carry phosphoserine. Thr689 carries the post-translational modification Phosphothreonine.

As to quaternary structure, interacts with non-phosphorylated form of RAB8A; phosphorylation of RAB8A at 'Thr-72' disrupts this interaction. Interacts with ARMC12. As to expression, ubiquitous.

It localises to the cytoplasm. In terms of biological role, acts as a GTPase activating protein for RAB7A. Does not act on RAB4, RAB5 or RAB6. This is TBC1 domain family member 15 (TBC1D15) from Homo sapiens (Human).